Here is a 146-residue protein sequence, read N- to C-terminus: Ribonuclease H (146 aa).

The 143-residue stretch at 1–143 (MQKKITIYTD…CDELARQAIQ (143 aa)) folds into the RNase H type-1 domain. Mg(2+) contacts are provided by Asp-10, Glu-48, Asp-70, and Asp-135.

This sequence belongs to the RNase H family. Monomer. Mg(2+) serves as cofactor.

The protein localises to the cytoplasm. It catalyses the reaction Endonucleolytic cleavage to 5'-phosphomonoester.. Functionally, endonuclease that specifically degrades the RNA of RNA-DNA hybrids. This is Ribonuclease H from Chlorobium luteolum (strain DSM 273 / BCRC 81028 / 2530) (Pelodictyon luteolum).